Reading from the N-terminus, the 179-residue chain is Shikimate kinase (179 aa).

Residue 12-17 participates in ATP binding; the sequence is GVGKSK. Residue S16 participates in Mg(2+) binding. Positions 34, 61, and 83 each coordinate substrate. R131 lines the ATP pocket. Residue R147 participates in substrate binding.

This sequence belongs to the shikimate kinase family. Monomer. The cofactor is Mg(2+).

It localises to the cytoplasm. It catalyses the reaction shikimate + ATP = 3-phosphoshikimate + ADP + H(+). It participates in metabolic intermediate biosynthesis; chorismate biosynthesis; chorismate from D-erythrose 4-phosphate and phosphoenolpyruvate: step 5/7. Catalyzes the specific phosphorylation of the 3-hydroxyl group of shikimic acid using ATP as a cosubstrate. The chain is Shikimate kinase from Leptospira borgpetersenii serovar Hardjo-bovis (strain JB197).